Here is a 293-residue protein sequence, read N- to C-terminus: tRNA (guanine-N(7)-)-methyltransferase (293 aa).

The span at Met1–Arg31 shows a compositional bias: basic and acidic residues. 2 disordered regions span residues Met1–Lys33 and Ile68–Arg97. Over residues Thr75 to Glu85 the composition is skewed to pro residues. S-adenosyl-L-methionine contacts are provided by residues Gly111, Glu134–Ile135, Asn169–Thr170, and Cys189. Asp192 is an active-site residue. Thr267 to Glu269 is a binding site for S-adenosyl-L-methionine.

This sequence belongs to the class I-like SAM-binding methyltransferase superfamily. TrmB family. In terms of assembly, forms a complex with TRM82.

It is found in the nucleus. The enzyme catalyses guanosine(46) in tRNA + S-adenosyl-L-methionine = N(7)-methylguanosine(46) in tRNA + S-adenosyl-L-homocysteine. Its pathway is tRNA modification; N(7)-methylguanine-tRNA biosynthesis. Catalyzes the formation of N(7)-methylguanine at position 46 (m7G46) in tRNA. In Chaetomium globosum (strain ATCC 6205 / CBS 148.51 / DSM 1962 / NBRC 6347 / NRRL 1970) (Soil fungus), this protein is tRNA (guanine-N(7)-)-methyltransferase.